Consider the following 255-residue polypeptide: Type III pantothenate kinase (255 aa).

An ATP-binding site is contributed by 6 to 13; it reads DIGNTNIK. Substrate is bound at residue 107 to 110; the sequence is GADR. The Proton acceptor role is filled by aspartate 109. Position 132 (threonine 132) interacts with ATP. Threonine 184 contributes to the substrate binding site.

This sequence belongs to the type III pantothenate kinase family. Homodimer. It depends on NH4(+) as a cofactor. K(+) serves as cofactor.

The protein localises to the cytoplasm. It catalyses the reaction (R)-pantothenate + ATP = (R)-4'-phosphopantothenate + ADP + H(+). It functions in the pathway cofactor biosynthesis; coenzyme A biosynthesis; CoA from (R)-pantothenate: step 1/5. Functionally, catalyzes the phosphorylation of pantothenate (Pan), the first step in CoA biosynthesis. The chain is Type III pantothenate kinase from Roseiflexus castenholzii (strain DSM 13941 / HLO8).